The primary structure comprises 207 residues: Large ribosomal subunit protein uL4 (207 aa).

The segment covering 44-58 (RAPTRATRERSDVAR) has biased composition (basic and acidic residues). Residues 44–82 (RAPTRATRERSDVARSGKKFGRQKGGGTARHGDRRSPIF) are disordered.

Belongs to the universal ribosomal protein uL4 family. As to quaternary structure, part of the 50S ribosomal subunit.

Functionally, one of the primary rRNA binding proteins, this protein initially binds near the 5'-end of the 23S rRNA. It is important during the early stages of 50S assembly. It makes multiple contacts with different domains of the 23S rRNA in the assembled 50S subunit and ribosome. Its function is as follows. Forms part of the polypeptide exit tunnel. In Zymomonas mobilis subsp. mobilis (strain ATCC 31821 / ZM4 / CP4), this protein is Large ribosomal subunit protein uL4.